Reading from the N-terminus, the 2326-residue chain is Probable voltage-dependent N-type calcium channel subunit alpha-1B (2326 aa).

The Cytoplasmic portion of the chain corresponds to 1–83 (MARLGNDVPA…DNIIRKYAKR (83 aa)). A disordered region spans residues 17–37 (AGGGRGANRHAGPQAGQRGMY). One copy of the I repeat lies at 75 to 351 (NIIRKYAKRI…LVLGVLSGEF (277 aa)). A helical transmembrane segment spans residues 84–107 (ITEWPPFEYMILATIIANCIVLAL). Over 108-124 (EQHLPDGDKTPMSERLD) the chain is Extracellular. Residues 125-145 (DTEPYFIGIFCFEAGIKIIAL) form a helical membrane-spanning segment. Residues 146–156 (GFAFHKGSYLR) are Cytoplasmic-facing. The chain crosses the membrane as a helical span at residues 157 to 175 (NGWNVMDFVVVLTGILTTI). Residues 176–180 (GTDFD) are Extracellular-facing. Residues 181-204 (LRTLRAVRVLRPLKLVSGIPSLQV) form a helical membrane-spanning segment. At 205-214 (VLKSIMKAMV) the chain is on the cytoplasmic side. A helical transmembrane segment spans residues 215–237 (PLLQIGLLLFFAILMFAIIGLEF). The Extracellular portion of the chain corresponds to 238-323 (YMGKFHKTCF…TANDALGNTW (86 aa)). The N-linked (GlcNAc...) asparagine glycan is linked to N271. A helical membrane pass occupies residues 324–348 (NWLYFIPLIVIGSFFMLNLVLGVLS). Residues 349 to 472 (GEFAKERERV…FFIRRMVKSQ (124 aa)) lie on the Cytoplasmic side of the membrane. A binding to the beta subunit region spans residues 371–388 (QQVEQEFNRYLRWIHIAE). Residues 458 to 702 (EKRFRFFIRR…VFLAIAVDNL (245 aa)) form an II repeat. Residues 473–491 (SFYWIVLCLVGLNTLCVAI) form a helical membrane-spanning segment. At 492 to 501 (VHYDQPPLLT) the chain is on the extracellular side. Residues 502–524 (DALYFAEFVFLGLFLTEMSLKMY) traverse the membrane as a helical segment. Residues 525–534 (GLGPRNYFHS) lie on the Cytoplasmic side of the membrane. A 1,2-diacyl-sn-glycero-3-phospho-(1D-myo-inositol-4,5-bisphosphate) is bound at residue S534. Residues 535–556 (SFNCFDFGVIVGSIFEVVWTAV) form a helical membrane-spanning segment. Residues 557–563 (KPDTSFG) lie on the Extracellular side of the membrane. Residues 564–576 (ISVLRALRLLRIF) form a helical membrane-spanning segment. 2 residues coordinate a 1,2-diacyl-sn-glycero-3-phospho-(1D-myo-inositol-4,5-bisphosphate): R574 and K577. Over 577–594 (KVTKYWNSLRNLVVSLLN) the chain is Cytoplasmic. Residues 595-620 (SMKSIISLLFLLFLFIVVFALLGMQL) traverse the membrane as a helical segment. Residues 621-672 (FGGQFNFEDGTPPTNFDTFPAAILTVFQILTGEDWNEVMYYGIEAHGGVKKG) lie on the Extracellular side of the membrane. Residues 673–699 (MFSSVYFIILTLFGNYTLLNVFLAIAV) form a helical membrane-spanning segment. Over 700–1148 (DNLANAQELT…ACHYIVNLRY (449 aa)) the chain is Cytoplasmic. The disordered stretch occupies residues 793 to 1048 (SHQIRPDMKT…LQHLPQQPED (256 aa)). 5 stretches are compositionally biased toward basic and acidic residues: residues 796–808 (IRPD…DRPL), 854–879 (KLGE…DDKR), 886–908 (SKET…SHEG), 935–979 (HGTE…EGAE), and 994–1011 (SEEK…VLRE). A compositionally biased stretch (polar residues) spans 1020 to 1032 (TQPSQDSGTQGNV). The stretch at 1134–1416 (NPVRRACHYI…IFVALIIITF (283 aa)) is one III repeat. A helical membrane pass occupies residues 1149 to 1167 (FEMCILLVITMSSIALAAE). Over 1168-1175 (DPVQGDAP) the chain is Extracellular. Residues 1176 to 1200 (RNNVLKYLDYVFTGVFTFEMVIKMI) traverse the membrane as a helical segment. Topologically, residues 1201-1214 (NLGLILHPGSYFRD) are cytoplasmic. A helical transmembrane segment spans residues 1215 to 1235 (LWNILDFIVVSGALVAFAFTG). Residues 1236–1241 (SRGKDL) are Extracellular-facing. Residues 1242–1262 (NTIKSLRVLRVLRPLKTIKRL) form a helical membrane-spanning segment. At 1263 to 1280 (PKLKAVFDCVVNSLKNVL) the chain is on the cytoplasmic side. A helical transmembrane segment spans residues 1281–1300 (NILIVYMLFMFIFAVIAVQL). Residues 1301 to 1387 (FKGKFFYCTD…DQGPSPSYRM (87 aa)) lie on the Extracellular side of the membrane. The chain crosses the membrane as a helical span at residues 1388-1413 (EMSIFYVVYFVVFPFFFVNIFVALII). The Cytoplasmic portion of the chain corresponds to 1414 to 1468 (ITFQEQGDKVMSDCSLEKNERACIDFAISAKPLTRYMPQNKQTFQYKMWKFVVSP). One copy of the IV repeat lies at 1453 to 1708 (NKQTFQYKMW…LFVAVIMDNF (256 aa)). Residues 1469 to 1487 (PFEYLIMALIALNTIVLMM) traverse the membrane as a helical segment. The Extracellular portion of the chain corresponds to 1488–1495 (KFYNAPDP). Residues 1496–1520 (YDRMLQYLNILFTFLFSMECVLKLI) traverse the membrane as a helical segment. Topologically, residues 1521-1530 (GFGVLNYFRD) are cytoplasmic. Residues 1531–1552 (AWNVFDFVTVLGSITDILVTEL) traverse the membrane as a helical segment. Topologically, residues 1553-1558 (ADSFIN) are extracellular. N-linked (GlcNAc...) asparagine glycosylation occurs at N1558. The chain crosses the membrane as a helical span at residues 1559 to 1577 (LSFLRLFRAARLIKLLRQG). Topologically, residues 1578–1596 (YTIRILLWTFVQSFKALPY) are cytoplasmic. The chain crosses the membrane as a helical span at residues 1597–1616 (VCLLIAMLFFIYAIIGMQVF). Topologically, residues 1617 to 1680 (GNIELDDDGA…IDGDECGSNF (64 aa)) are extracellular. The chain crosses the membrane as a helical span at residues 1681 to 1704 (AYFYFVSFIFFSSFLMLNLFVAVI). At 1705–2326 (MDNFEYLTRD…YRETDEDDWC (622 aa)) the chain is on the cytoplasmic side. An EF-hand domain is found at 1721–1756 (HHLDEFIRVWAEYDPGARGRITYNDMYEMLRHMCPP). Ca(2+) contacts are provided by D1734, R1740, and D1745. Over residues 1897–1912 (EEPSSYSTSHKNSVNP) the composition is skewed to polar residues. 4 disordered regions span residues 1897–1916 (EEPS…LYQG), 1932–1954 (CAEG…KSSS), 2039–2242 (PHHH…SSDP), and 2271–2326 (TTAT…DDWC). Positions 1932–1948 (CAEGKKEVPESHPEEAG) are enriched in basic and acidic residues. Residues 2039-2055 (PHHHHHHHRCHHRREKK) are compositionally biased toward basic residues. 2 stretches are compositionally biased toward basic and acidic residues: residues 2056–2069 (QRSL…HADE) and 2077–2104 (QLRD…EKQR). 3 stretches are compositionally biased toward polar residues: residues 2142 to 2161 (GSGS…STPS), 2275 to 2289 (GRSP…QPPQ), and 2302 to 2311 (GRSTGPSTAA).

The protein belongs to the calcium channel alpha-1 subunit (TC 1.A.1.11) family. In terms of assembly, multisubunit complex consisting of alpha-1, alpha-2, beta and delta subunits in a 1:1:1:1 ratio. The channel activity is directed by the pore-forming and voltage-sensitive alpha-1 subunit. In many cases, this subunit is sufficient to generate voltage-sensitive calcium channel activity. The auxiliary subunits beta and alpha-2/delta linked by a disulfide bridge regulate the channel activity. Post-translationally, phosphorylated in vitro by CaM-kinase II, PKA, PKC and CGPK. Expression is higher in the electric lobe than in the forebrain.

The protein resides in the membrane. Its function is as follows. The isoform alpha-1B gives rise to N-type calcium currents. N-type calcium channels belong to the 'high-voltage activated' (HVA) group. The chain is Probable voltage-dependent N-type calcium channel subunit alpha-1B from Diplobatis ommata (Ocellated electric ray).